A 1052-amino-acid polypeptide reads, in one-letter code: F-box/WD repeat-containing protein 10 (1052 aa).

A WD 1 repeat occupies 169-206; that stretch reads GLNQDITDVCFSPEKDHSSKSATSQVYWTAKTQHTSLP. The F-box domain maps to 276-323; that stretch reads DFIRYLPIHLSKYILRMLDRHTLNKCASVSQHWAAMAQQVKMDLSAHG. WD repeat units lie at residues 409 to 447, 451 to 490, 493 to 532, 534 to 569, 572 to 609, and 611 to 652; these read SDTWDQNRVIHYSGGDLIAVSSNRKIHLLDIIQVKAIPV, GHAGSVRALFLCEEENFLLSGSYDLSIRYWDLKSGVCTRI, GHQGTITCMDLCKNRLVSGGRDCQVKVWDVDTGKCLKTFR, KDPILATRINDTYIVSSCERGLVKVWHIAMAQLVKT, GHEGAVKCLFFDQWHLLSGSTDGLVMAWSMVGKYERCL, and AFKH…KVLK. Residues 690 to 719 are a coiled coil; that stretch reads YAVEKTKQKKNKEKEEEKEENSLMEILSKC. The disordered stretch occupies residues 766–805; sequence LQSQGKSKSPRRDADDVEKAQKQGQLETPGKLPSHPKKKS. The segment covering 775–786 has biased composition (basic and acidic residues); sequence PRRDADDVEKAQ. Residues 986–1010 are a coiled coil; it reads VLLTVKEEKEHQEAKMKEYQAREST.

Functionally, probable substrate-recognition component of a SCF (SKP1-CUL1-F-box protein)-type E3 ubiquitin ligase complex which mediates the ubiquitination and subsequent proteasomal degradation of target proteins. Overexpression is leading to degradation of CBX5 and CBX1. The sequence is that of F-box/WD repeat-containing protein 10 (FBXW10) from Homo sapiens (Human).